Reading from the N-terminus, the 658-residue chain is Biosynthetic arginine decarboxylase (658 aa).

Position 127 is an N6-(pyridoxal phosphate)lysine (lysine 127). Residue 307–317 (FDVGGGLGVDY) participates in substrate binding.

The protein belongs to the Orn/Lys/Arg decarboxylase class-II family. SpeA subfamily. Requires Mg(2+) as cofactor. Pyridoxal 5'-phosphate serves as cofactor.

It carries out the reaction L-arginine + H(+) = agmatine + CO2. It participates in amine and polyamine biosynthesis; agmatine biosynthesis; agmatine from L-arginine: step 1/1. Functionally, catalyzes the biosynthesis of agmatine from arginine. The polypeptide is Biosynthetic arginine decarboxylase (Salmonella typhi).